The sequence spans 433 residues: Myricetin 3-O-glucosyl 1,2-rhamnoside 6'-O-caffeoyltransferase AT2 (433 aa).

Residues histidine 157 and aspartate 375 each act as proton acceptor in the active site.

Belongs to the plant acyltransferase family. In terms of tissue distribution, expressed in young cromes.

The catalysed reaction is myricetin 3-O-[beta-D-glucosyl-(1-&gt;2)-alpha-L-rhamnoside] + (E)-caffeoyl-CoA = myricetin 3-O-[(6-O-(E)-caffeoyl-beta-D-glucosyl)-(1-&gt;2)-alpha-L-rhamnoside] + CoA. It participates in flavonoid metabolism. Functionally, caffeoyltransferase involved in montbretin A (MbA) biosynthesis. Catalyzes the caffeoylation of myricetin 3-O-beta-D-glucosyl 1,2-alpha-L-rhamnoside (MRG) to produce myricetin 3-O-(6'-O-caffeoyl)-beta-D-glucosyl 1,2-alpha-L-rhamnoside (mini-MbA), a precursor of MbA. Mini-MbA and MbA are potent inhibitors of human pancreatic alpha-amylase and are being developed as drug candidates to treat type-2 diabetes. In vitro, is able to catalyze the caffeoylation of quercetin 3-O-sophoroside (QGG), although QGG may not be a physiological substrate in vivo. In vitro, can use coumaryl-CoA, feruloyl-CoA and acetyl-CoA, although these three acyl donors may not be physiological in vivo. This chain is Myricetin 3-O-glucosyl 1,2-rhamnoside 6'-O-caffeoyltransferase AT2, found in Crocosmia x crocosmiiflora (Montbretia).